A 129-amino-acid chain; its full sequence is MAKTAAKVRKKVKKNVAEGIAHVHASFNNTIITITDRQGNALSWATSGGAGFKGSRKSTPFAAQVAAEAAGKAAQECGVKNLEVRIKGPGPGRESAVRALNALGMKISSITDITPIPHNGCRPPKKRRI.

The protein belongs to the universal ribosomal protein uS11 family. In terms of assembly, part of the 30S ribosomal subunit. Interacts with proteins S7 and S18. Binds to IF-3.

Located on the platform of the 30S subunit, it bridges several disparate RNA helices of the 16S rRNA. Forms part of the Shine-Dalgarno cleft in the 70S ribosome. The protein is Small ribosomal subunit protein uS11 of Aromatoleum aromaticum (strain DSM 19018 / LMG 30748 / EbN1) (Azoarcus sp. (strain EbN1)).